We begin with the raw amino-acid sequence, 440 residues long: Trigger factor (440 aa).

Residues 163-248 (GDTVNIDFDG…INEIKYKNVP (86 aa)) enclose the PPIase FKBP-type domain.

Belongs to the FKBP-type PPIase family. Tig subfamily.

It localises to the cytoplasm. It catalyses the reaction [protein]-peptidylproline (omega=180) = [protein]-peptidylproline (omega=0). Functionally, involved in protein export. Acts as a chaperone by maintaining the newly synthesized protein in an open conformation. Functions as a peptidyl-prolyl cis-trans isomerase. The protein is Trigger factor of Staphylococcus carnosus (strain TM300).